Reading from the N-terminus, the 530-residue chain is Pancreatic secretory granule membrane major glycoprotein GP2 (530 aa).

The signal sequence occupies residues 1–21 (MVACDLLWLAAASCLLTLVFP). N-linked (GlcNAc...) asparagine glycosylation occurs at Asn-33. 11 disulfide bridges follow: Cys-41/Cys-52, Cys-56/Cys-150, Cys-78/Cys-168, Cys-100/Cys-138, Cys-106/Cys-173, Cys-131/Cys-139, Cys-183/Cys-193, Cys-187/Cys-202, Cys-204/Cys-234, Cys-222/Cys-313, and Cys-254/Cys-277. A D10C region spans residues 54-74 (DPCQNHTVLNDPSRSTENTVS). N-linked (GlcNAc...) asparagine glycosylation is found at Asn-58 and Asn-127. Positions 179-223 (APKKCEIACRPEEECVFQNNSWTCVCRQDLNVSDTLSLQPLLDCG) constitute an EGF-like domain. N-linked (GlcNAc...) asparagine glycans are attached at residues Asn-197 and Asn-209. Residues 221 to 314 (DCGANEIKVK…FLVNVNFQCA (94 aa)) are ZP-N. One can recognise a ZP domain in the interval 221–477 (DCGANEIKVK…PSCSTSRLRS (257 aa)). N-linked (GlcNAc...) asparagine glycans are attached at residues Asn-284 and Asn-320. The tract at residues 315–338 (YPLDMNVSLQTALQPIVSSLNVDV) is flexible ZP-N/ZP-C linker. The internal hydrophobic patch (IHP) stretch occupies residues 339–350 (GGAGEFTVTMAL). Residues 339 to 477 (GGAGEFTVTM…PSCSTSRLRS (139 aa)) are ZP-C. 3 disulfides stabilise this stretch: Cys-394-Cys-454, Cys-415-Cys-470, and Cys-459-Cys-466. The segment at 484 to 492 (LTRVLDIGP) is external hydrophobic patch (EHP). Residue Asn-505 is the site of GPI-anchor amidated asparagine attachment. A propeptide spans 506–530 (GTPRNTGFLLAWPTFFLPVFLAWLF) (removed in mature form).

As to quaternary structure, interacts with SYCN. Interacts with bacterial adhesin fimH. In terms of processing, N-glycosylated. As to expression, expressed in pancreas.

It is found in the zymogen granule membrane. The protein localises to the secreted. Its subcellular location is the cell membrane. The protein resides in the apical cell membrane. It localises to the membrane raft. It is found in the endosome. Its function is as follows. Functions as an intestinal M-cell transcytotic receptor specific of type-I-piliated bacteria that participates in the mucosal immune response toward these bacteria. At the apical membrane of M-cells it binds fimH, a protein of the bacteria type I pilus tip. Internalizes bound bacteria, like E.coli and S.typhimurium, from the lumen of the intestine and delivers them, through M-cells, to the underlying organized lymphoid follicles where they are captured by antigen-presenting dendritic cells to elicit a mucosal immune response. In Rattus norvegicus (Rat), this protein is Pancreatic secretory granule membrane major glycoprotein GP2.